A 179-amino-acid polypeptide reads, in one-letter code: Large ribosomal subunit protein uL5 (179 aa).

The protein belongs to the universal ribosomal protein uL5 family. As to quaternary structure, part of the 50S ribosomal subunit; part of the 5S rRNA/L5/L18/L25 subcomplex. Contacts the 5S rRNA and the P site tRNA. Forms a bridge to the 30S subunit in the 70S ribosome.

Functionally, this is one of the proteins that bind and probably mediate the attachment of the 5S RNA into the large ribosomal subunit, where it forms part of the central protuberance. In the 70S ribosome it contacts protein S13 of the 30S subunit (bridge B1b), connecting the 2 subunits; this bridge is implicated in subunit movement. Contacts the P site tRNA; the 5S rRNA and some of its associated proteins might help stabilize positioning of ribosome-bound tRNAs. This chain is Large ribosomal subunit protein uL5, found in Pseudomonas aeruginosa (strain LESB58).